The chain runs to 215 residues: Adenylate kinase (215 aa).

10 to 15 (GAGKGT) provides a ligand contact to ATP. The interval 30–59 (STGDMFRAAMKNETEMGKLAKSFIDKGELV) is NMP. AMP is bound by residues Thr-31, Arg-36, 57–59 (ELV), 86–89 (GYPR), and Gln-93. Positions 127-165 (GRYICRNCGATYHKIFNPTKVEGTCDVCGSHDLYQRADD) are LID. Arg-128 contacts ATP. Zn(2+) is bound by residues Cys-131 and Cys-134. 137-138 (TY) is a binding site for ATP. The Zn(2+) site is built by Cys-151 and Cys-154. Residues Arg-162 and Arg-173 each contribute to the AMP site. Position 201 (Gln-201) interacts with ATP.

It belongs to the adenylate kinase family. In terms of assembly, monomer.

The protein localises to the cytoplasm. The catalysed reaction is AMP + ATP = 2 ADP. It functions in the pathway purine metabolism; AMP biosynthesis via salvage pathway; AMP from ADP: step 1/1. Functionally, catalyzes the reversible transfer of the terminal phosphate group between ATP and AMP. Plays an important role in cellular energy homeostasis and in adenine nucleotide metabolism. In Lactococcus lactis subsp. cremoris (strain SK11), this protein is Adenylate kinase.